The chain runs to 266 residues: Tryptophan synthase alpha chain (266 aa).

Catalysis depends on proton acceptor residues E50 and D61.

The protein belongs to the TrpA family. As to quaternary structure, tetramer of two alpha and two beta chains.

It catalyses the reaction (1S,2R)-1-C-(indol-3-yl)glycerol 3-phosphate + L-serine = D-glyceraldehyde 3-phosphate + L-tryptophan + H2O. Its pathway is amino-acid biosynthesis; L-tryptophan biosynthesis; L-tryptophan from chorismate: step 5/5. The alpha subunit is responsible for the aldol cleavage of indoleglycerol phosphate to indole and glyceraldehyde 3-phosphate. The sequence is that of Tryptophan synthase alpha chain from Alkaliphilus metalliredigens (strain QYMF).